We begin with the raw amino-acid sequence, 108 residues long: UPF0145 protein ACIAD2946 (108 aa).

This sequence belongs to the UPF0145 family.

In Acinetobacter baylyi (strain ATCC 33305 / BD413 / ADP1), this protein is UPF0145 protein ACIAD2946.